The following is a 405-amino-acid chain: Phosphoglycerate kinase (405 aa).

Residues 21 to 23, R36, 59 to 62, R119, and R161 contribute to the substrate site; these read DFN and HLGR. ATP is bound by residues K212, G301, E332, and 361–364; that span reads GGDS.

It belongs to the phosphoglycerate kinase family. In terms of assembly, monomer.

It localises to the cytoplasm. The enzyme catalyses (2R)-3-phosphoglycerate + ATP = (2R)-3-phospho-glyceroyl phosphate + ADP. It functions in the pathway carbohydrate degradation; glycolysis; pyruvate from D-glyceraldehyde 3-phosphate: step 2/5. The sequence is that of Phosphoglycerate kinase from Leuconostoc mesenteroides subsp. mesenteroides (strain ATCC 8293 / DSM 20343 / BCRC 11652 / CCM 1803 / JCM 6124 / NCDO 523 / NBRC 100496 / NCIMB 8023 / NCTC 12954 / NRRL B-1118 / 37Y).